We begin with the raw amino-acid sequence, 441 residues long: Mannose-6-phosphate isomerase 2 (441 aa).

Residues glutamine 131, histidine 133, glutamate 158, and histidine 296 each coordinate Zn(2+). Arginine 315 is an active-site residue.

Belongs to the mannose-6-phosphate isomerase type 1 family. Zn(2+) serves as cofactor. In terms of tissue distribution, not expressed in any organs under light (at protein level).

It carries out the reaction D-mannose 6-phosphate = D-fructose 6-phosphate. It participates in nucleotide-sugar biosynthesis; GDP-alpha-D-mannose biosynthesis; alpha-D-mannose 1-phosphate from D-fructose 6-phosphate: step 1/2. Inhibited by EDTA, Zn(2+), Cd(2+), DTT, p-chloromercuribenzoate and L-ascorbic acid (AsA). Functionally, involved in the synthesis of the GDP-mannose and dolichol-phosphate-mannose required for a number of critical mannosyl transfer reactions. The chain is Mannose-6-phosphate isomerase 2 (PMI2) from Arabidopsis thaliana (Mouse-ear cress).